Here is a 105-residue protein sequence, read N- to C-terminus: SAGA-associated factor 11 (105 aa).

The segment at 76-97 adopts an SGF11-type zinc-finger fold; that stretch reads FRCPNCSRDLSANRFAAHLERC.

The protein belongs to the SGF11 family. Component of the 1.8 MDa SAGA transcription coactivator-HAT complex. SAGA is built of 5 distinct domains with specialized functions. Within the SAGA complex, SUS1, SGF11, SGF73 and UBP8 form an additional subcomplex of SAGA called the DUB module (deubiquitination module). Interacts directly with SGF73, SUS1 and UBP8.

The protein localises to the nucleus. In terms of biological role, functions as a component of the transcription regulatory histone acetylation (HAT) complex SAGA. At the promoters, SAGA is required for recruitment of the basal transcription machinery. It influences RNA polymerase II transcriptional activity through different activities such as TBP interaction and promoter selectivity, interaction with transcription activators, and chromatin modification through histone acetylation and deubiquitination. SAGA acetylates nucleosomal histone H3 to some extent (to form H3K9ac, H3K14ac, H3K18ac and H3K23ac). SAGA interacts with DNA via upstream activating sequences (UASs). Involved in transcriptional regulation of a subset of SAGA-regulated genes. Within the SAGA complex, participates in a subcomplex, that specifically deubiquitinates histones H2B. This Eremothecium gossypii (strain ATCC 10895 / CBS 109.51 / FGSC 9923 / NRRL Y-1056) (Yeast) protein is SAGA-associated factor 11.